We begin with the raw amino-acid sequence, 251 residues long: Large ribosomal subunit protein uL3 (251 aa).

Gln151 is subject to N5-methylglutamine. The disordered stretch occupies residues 214-251 (KDAPFPAGLKSAANSNSAPTETPAEEVAAPEATEGQEG). The segment covering 231–251 (APTETPAEEVAAPEATEGQEG) has biased composition (low complexity).

The protein belongs to the universal ribosomal protein uL3 family. In terms of assembly, part of the 50S ribosomal subunit. Forms a cluster with proteins L14 and L19. In terms of processing, methylated by PrmB.

In terms of biological role, one of the primary rRNA binding proteins, it binds directly near the 3'-end of the 23S rRNA, where it nucleates assembly of the 50S subunit. This chain is Large ribosomal subunit protein uL3, found in Rhizorhabdus wittichii (strain DSM 6014 / CCUG 31198 / JCM 15750 / NBRC 105917 / EY 4224 / RW1) (Sphingomonas wittichii).